The following is a 448-amino-acid chain: Tubby-like F-box protein 3 (448 aa).

The region spanning 56–102 (ESRWASLPPELLREVIRRLEADESTWPSRRNVVCFAAVCRTWREMCK) is the F-box domain. The span at 387–403 (PSPPPAGAPTPSQPGPA) shows a compositional bias: pro residues. Residues 387–406 (PSPPPAGAPTPSQPGPADPE) are disordered.

The protein belongs to the TUB family. Expressed in roots, leaves, flowers and seeds.

The polypeptide is Tubby-like F-box protein 3 (TULP3) (Oryza sativa subsp. japonica (Rice)).